Consider the following 137-residue polypeptide: NADPH-dependent 7-cyano-7-deazaguanine reductase (137 aa).

The active-site Thioimide intermediate is cysteine 50. The active-site Proton donor is aspartate 57. Substrate is bound by residues 72–74 (VEL) and 91–92 (HE).

The protein belongs to the GTP cyclohydrolase I family. QueF type 1 subfamily.

The protein resides in the cytoplasm. The enzyme catalyses 7-aminomethyl-7-carbaguanine + 2 NADP(+) = 7-cyano-7-deazaguanine + 2 NADPH + 3 H(+). It functions in the pathway tRNA modification; tRNA-queuosine biosynthesis. Catalyzes the NADPH-dependent reduction of 7-cyano-7-deazaguanine (preQ0) to 7-aminomethyl-7-deazaguanine (preQ1). The sequence is that of NADPH-dependent 7-cyano-7-deazaguanine reductase from Synechococcus sp. (strain CC9902).